The primary structure comprises 657 residues: Endoplasmic reticulum mannosyl-oligosaccharide 1,2-alpha-mannosidase (657 aa).

The Cytoplasmic portion of the chain corresponds to 1–49 (MYPPPPAPAPHRDFISVTLSLGESYDNSKSRRRRSCWRKWKQLSRLQRN). Residues 50–70 (VILFVLGFLILCGFLYSLQVS) form a helical membrane-spanning segment. Over 71 to 657 (DQWKALSGSR…AHPLPIWSPA (587 aa)) the chain is Lumenal. Phosphoserine is present on Ser-101. Residues 118-157 (HLRRGPPHLQIRPPNTVSKDGMQDDAKEREAALGKAQQEE) form a disordered region. The span at 138 to 157 (GMQDDAKEREAALGKAQQEE) shows a compositional bias: basic and acidic residues. Glu-288 acts as the Proton donor in catalysis. Residue Asp-421 is part of the active site. Cys-485 and Cys-514 form a disulfide bridge. Catalysis depends on Glu-528, which acts as the Proton donor. Glu-557 is a catalytic residue. Thr-646 serves as a coordination point for Ca(2+).

This sequence belongs to the glycosyl hydrolase 47 family. Ca(2+) is required as a cofactor.

Its subcellular location is the endoplasmic reticulum membrane. It catalyses the reaction N(4)-(alpha-D-Man-(1-&gt;2)-alpha-D-Man-(1-&gt;2)-alpha-D-Man-(1-&gt;3)-[alpha-D-Man-(1-&gt;2)-alpha-D-Man-(1-&gt;3)-[alpha-D-Man-(1-&gt;2)-alpha-D-Man-(1-&gt;6)]-alpha-D-Man-(1-&gt;6)]-beta-D-Man-(1-&gt;4)-beta-D-GlcNAc-(1-&gt;4)-beta-D-GlcNAc)-L-asparaginyl-[protein] (N-glucan mannose isomer 9A1,2,3B1,2,3) + 4 H2O = N(4)-(alpha-D-Man-(1-&gt;3)-[alpha-D-Man-(1-&gt;3)-[alpha-D-Man-(1-&gt;6)]-alpha-D-Man-(1-&gt;6)]-beta-D-Man-(1-&gt;4)-beta-D-GlcNAc-(1-&gt;4)-beta-D-GlcNAc)-L-asparaginyl-[protein] (N-glucan mannose isomer 5A1,2) + 4 beta-D-mannose. The enzyme catalyses N(4)-(alpha-D-Man-(1-&gt;2)-alpha-D-Man-(1-&gt;2)-alpha-D-Man-(1-&gt;3)-[alpha-D-Man-(1-&gt;3)-[alpha-D-Man-(1-&gt;2)-alpha-D-Man-(1-&gt;6)]-alpha-D-Man-(1-&gt;6)]-beta-D-Man-(1-&gt;4)-beta-D-GlcNAc-(1-&gt;4)-beta-D-GlcNAc)-L-asparaginyl-[protein] (N-glucan mannose isomer 8A1,2,3B1,3) + 3 H2O = N(4)-(alpha-D-Man-(1-&gt;3)-[alpha-D-Man-(1-&gt;3)-[alpha-D-Man-(1-&gt;6)]-alpha-D-Man-(1-&gt;6)]-beta-D-Man-(1-&gt;4)-beta-D-GlcNAc-(1-&gt;4)-beta-D-GlcNAc)-L-asparaginyl-[protein] (N-glucan mannose isomer 5A1,2) + 3 beta-D-mannose. It participates in protein modification; protein glycosylation. In terms of biological role, involved in glycoprotein quality control targeting of misfolded glycoproteins for degradation. It primarily trims a single alpha-1,2-linked mannose residue from Man(9)GlcNAc(2) to produce Man(8)GlcNAc(2), but at high enzyme concentrations, as found in the ER quality control compartment (ERQC), it further trims the carbohydrates to Man(5-6)GlcNAc(2). The sequence is that of Endoplasmic reticulum mannosyl-oligosaccharide 1,2-alpha-mannosidase (Man1b1) from Rattus norvegicus (Rat).